Here is a 302-residue protein sequence, read N- to C-terminus: Phospho-N-acetylmuramoyl-pentapeptide-transferase (302 aa).

9 consecutive transmembrane segments (helical) span residues Met1–Arg21, Gly42–Ser62, Val68–Val88, Phe123–Val143, Gly154–Leu174, Gly178–Asn198, Ile204–Leu224, Phe229–Val249, and Ile279–Gly299.

This sequence belongs to the glycosyltransferase 4 family. MraY subfamily. Mg(2+) is required as a cofactor.

It is found in the cell inner membrane. The enzyme catalyses UDP-N-acetyl-alpha-D-muramoyl-L-alanyl-gamma-D-glutamyl-meso-2,6-diaminopimeloyl-D-alanyl-D-alanine + di-trans,octa-cis-undecaprenyl phosphate = di-trans,octa-cis-undecaprenyl diphospho-N-acetyl-alpha-D-muramoyl-L-alanyl-D-glutamyl-meso-2,6-diaminopimeloyl-D-alanyl-D-alanine + UMP. It functions in the pathway cell wall biogenesis; peptidoglycan biosynthesis. Catalyzes the initial step of the lipid cycle reactions in the biosynthesis of the cell wall peptidoglycan: transfers peptidoglycan precursor phospho-MurNAc-pentapeptide from UDP-MurNAc-pentapeptide onto the lipid carrier undecaprenyl phosphate, yielding undecaprenyl-pyrophosphoryl-MurNAc-pentapeptide, known as lipid I. In Thermotoga petrophila (strain ATCC BAA-488 / DSM 13995 / JCM 10881 / RKU-1), this protein is Phospho-N-acetylmuramoyl-pentapeptide-transferase.